A 524-amino-acid chain; its full sequence is Magnesium/proton exchanger 2 (524 aa).

11 consecutive transmembrane segments (helical) span residues 28–48, 88–108, 125–145, 157–177, 185–205, 325–345, 349–369, 377–397, 430–450, 462–482, and 496–516; these read GVRA…LSAI, IADV…LATI, GTLV…CVVM, LGVW…LYII, VITL…LLHA, VIGI…AFIP, IAHG…IAYG, ISCV…AAGT, IYVG…LFVY, LSFS…VLVL, and MWAW…VVLS.

The protein belongs to the Ca(2+):cation antiporter (CaCA) (TC 2.A.19) family. MHX subfamily.

It is found in the vacuole membrane. Functionally, vacuolar transporter that exchanges protons with Mg(2+), Zn(2+) and Fe(2+) ions. May control the partitioning of Mg(2+) and Zn(2+) between plant organs. The chain is Magnesium/proton exchanger 2 (MHX2) from Oryza sativa subsp. japonica (Rice).